The chain runs to 507 residues: Pyridoxine 4-oxidase (507 aa).

Residue H448 is the Proton acceptor of the active site.

Belongs to the GMC oxidoreductase family. As to quaternary structure, monomer. The cofactor is FAD.

The enzyme catalyses pyridoxine + O2 = pyridoxal + H2O2. The protein operates within cofactor degradation; B6 vitamer degradation; pyridoxal from pyridoxine (oxidase route): step 1/1. In Microbacterium luteolum (Aureobacterium luteolum), this protein is Pyridoxine 4-oxidase (pno).